The following is a 166-amino-acid chain: Endoribonuclease YbeY (166 aa).

The Zn(2+) site is built by His-132, His-136, and His-142.

This sequence belongs to the endoribonuclease YbeY family. Requires Zn(2+) as cofactor.

It localises to the cytoplasm. Its function is as follows. Single strand-specific metallo-endoribonuclease involved in late-stage 70S ribosome quality control and in maturation of the 3' terminus of the 16S rRNA. This Clostridium acetobutylicum (strain ATCC 824 / DSM 792 / JCM 1419 / IAM 19013 / LMG 5710 / NBRC 13948 / NRRL B-527 / VKM B-1787 / 2291 / W) protein is Endoribonuclease YbeY.